Reading from the N-terminus, the 186-residue chain is MGLLDRLSILLGLKKKEVHVLCLGLDNSGKTTIINKLKPSNAQSQNILPTIGFSIEKFKSSSLSFTVFDMSGQGRYRNLWEHYYKEGQAIIFVIDSSDRLRMVVAKEELDTLLNHPDIKHRRIPILFFANKMDLRDAVTSVKVSQLLCLENIKDKPWHICASDAIKGEGLQEGVDWLQDQIQTVKT.

A lipid anchor (N-myristoyl glycine) is attached at G2. Residues 24-31 (GLDNSGKT), T50, 69-73 (DMSGQ), G72, 130-133 (NKMD), and A164 each bind GTP. A Mg(2+)-binding site is contributed by T50.

Belongs to the small GTPase superfamily. Arf family. Interacts with SEC61B, ARL6IP1, ARL6IP2, ARL6IP3, ARL6IP4 ARL6IP5 and ARL6IP6. Interacts (GTP-bound form) with the BBSome a complex that contains BBS1, BBS2, BBS4, BBS5, BBS7, BBS8/TTC8, BBS9 and BBIP10. Interacts (GTP-free form) with IFT27.

The protein localises to the cell projection. Its subcellular location is the cilium membrane. The protein resides in the cytoplasm. It localises to the cytoskeleton. It is found in the cilium axoneme. The protein localises to the cilium basal body. Functionally, involved in membrane protein trafficking at the base of the ciliary organelle. Mediates recruitment onto plasma membrane of the BBSome complex which would constitute a coat complex required for sorting of specific membrane proteins to the primary cilia. Together with the BBSome complex and LTZL1, controls SMO ciliary trafficking and contributes to the sonic hedgehog (SHH) pathway regulation. May regulate cilia assembly and disassembly and subsequent ciliary signaling events such as the Wnt signaling cascade. Isoform 2 may be required for proper retinal function and organization. The polypeptide is ADP-ribosylation factor-like protein 6 (ARL6) (Pongo abelii (Sumatran orangutan)).